Reading from the N-terminus, the 298-residue chain is ATP synthase gamma chain (298 aa).

It belongs to the ATPase gamma chain family. As to quaternary structure, F-type ATPases have 2 components, CF(1) - the catalytic core - and CF(0) - the membrane proton channel. CF(1) has five subunits: alpha(3), beta(3), gamma(1), delta(1), epsilon(1). CF(0) has three main subunits: a, b and c.

It localises to the cell inner membrane. In terms of biological role, produces ATP from ADP in the presence of a proton gradient across the membrane. The gamma chain is believed to be important in regulating ATPase activity and the flow of protons through the CF(0) complex. The polypeptide is ATP synthase gamma chain (Francisella tularensis subsp. tularensis (strain WY96-3418)).